We begin with the raw amino-acid sequence, 585 residues long: MNLFADFENRIKTALETLDLVKEKRSELSFDRIVVEPPRDASHGDAATNAAMVLAKPLGVSPRVLADLIGEKLKEDADIAEVSVAGPGFLNIRLSVAYWQRLLANVIAGGTDFGRSQTGAGRKVNVEYVSANPTGPMHVGHCRGAVVGDALANLLAFAGYGVTKEYYINDAGSQIDVLARSVFLRYREALGEAVGEIPAGLYPGDYLIPVGEALAQEYGVRLHNMPEEQWMEIVKDRAIDAMMVMIREDLAALNVHHDLFYSERQLHANGAAAIRTAINDLTFKGHVYRGTLPPPKGQLPEDWEDREQTLFRSTEVGDDIDRPLIKSDGSYTYFAADVAYFKDKYDRGFDRMIYVLGADHGGYVKRLEAVAKAVSEGKAKLTVLLCQLVKLYRDGEPVKMSKRSGDFVTLRDVVEEVGRDSVRFMMLYRKSSEPLDFDFAKVTEQSKDNPVFYVQYAHARCMSIFRQAREAFGDIDLSPDVLEAAVTGITEPSEVQLIAKLAEYPRIIEASAQSMEPHRIAFYLYDLASSFHAHWNKGKDQPELRFVNDKNRQSSLARLGLVHAVASVLQSGLAITGTDAPQEMR.

Positions 131–141 match the 'HIGH' region motif; sequence ANPTGPMHVGH.

It belongs to the class-I aminoacyl-tRNA synthetase family. Monomer.

It is found in the cytoplasm. It catalyses the reaction tRNA(Arg) + L-arginine + ATP = L-arginyl-tRNA(Arg) + AMP + diphosphate. The protein is Arginine--tRNA ligase of Allorhizobium ampelinum (strain ATCC BAA-846 / DSM 112012 / S4) (Agrobacterium vitis (strain S4)).